A 152-amino-acid polypeptide reads, in one-letter code: Small ribosomal subunit protein uS15 (152 aa).

Belongs to the universal ribosomal protein uS15 family. In terms of assembly, part of the 30S ribosomal subunit.

This Methanospirillum hungatei JF-1 (strain ATCC 27890 / DSM 864 / NBRC 100397 / JF-1) protein is Small ribosomal subunit protein uS15.